Reading from the N-terminus, the 208-residue chain is MTLQTFQSADFAVFSVDGLERRMNAIKTHIQPKLETLGERFSHYLSDQTGEPFFYHVAKHARRKVNPPNDTWVAFSTNKRGYKMLPHFQIGLWGTHAFIYFGLIYECPQKEVAAHALLEHLNDLKTNIPNDFVWSIDHTKPDVLPHNTLEAKDLQKIIERLATVKKAELLVGIHIAPEEFSSMTNEQFQTKIESTIHSLLPLYNICNR.

This sequence belongs to the UPF0637 family.

The protein is UPF0637 protein Bcer98_2662 of Bacillus cytotoxicus (strain DSM 22905 / CIP 110041 / 391-98 / NVH 391-98).